The following is a 469-amino-acid chain: 3-isopropylmalate dehydratase large subunit (469 aa).

Residues Cys349, Cys410, and Cys413 each contribute to the [4Fe-4S] cluster site.

Belongs to the aconitase/IPM isomerase family. LeuC type 1 subfamily. In terms of assembly, heterodimer of LeuC and LeuD. The cofactor is [4Fe-4S] cluster.

The catalysed reaction is (2R,3S)-3-isopropylmalate = (2S)-2-isopropylmalate. Its pathway is amino-acid biosynthesis; L-leucine biosynthesis; L-leucine from 3-methyl-2-oxobutanoate: step 2/4. Its function is as follows. Catalyzes the isomerization between 2-isopropylmalate and 3-isopropylmalate, via the formation of 2-isopropylmaleate. The sequence is that of 3-isopropylmalate dehydratase large subunit from Neisseria meningitidis serogroup C (strain 053442).